Here is a 258-residue protein sequence, read N- to C-terminus: Probable S-methyl-5'-thioinosine phosphorylase (258 aa).

Phosphate is bound at residue 53-54 (RH). Position 180 (M180) interacts with substrate. Phosphate is bound at residue T181. 204–206 (NQA) contacts substrate.

The protein belongs to the PNP/MTAP phosphorylase family. MTAP subfamily. In terms of assembly, homotrimer.

It carries out the reaction S-methyl-5'-thioinosine + phosphate = 5-(methylsulfanyl)-alpha-D-ribose 1-phosphate + hypoxanthine. It participates in purine metabolism; purine nucleoside salvage. Catalyzes the reversible phosphorylation of S-methyl-5'-thioinosine (MTI) to hypoxanthine and 5-methylthioribose-1-phosphate. Involved in the breakdown of S-methyl-5'-thioadenosine (MTA), a major by-product of polyamine biosynthesis. Catabolism of (MTA) occurs via deamination to MTI and phosphorolysis to hypoxanthine. The polypeptide is Probable S-methyl-5'-thioinosine phosphorylase (Methanosarcina acetivorans (strain ATCC 35395 / DSM 2834 / JCM 12185 / C2A)).